An 815-amino-acid chain; its full sequence is Leucine--tRNA ligase (815 aa).

The short motif at 42–52 (PYPSGRLHMGH) is the 'HIGH' region element. The 'KMSKS' region motif lies at 574 to 578 (KMSKS). Position 577 (Lys-577) interacts with ATP.

The protein belongs to the class-I aminoacyl-tRNA synthetase family.

It is found in the cytoplasm. The enzyme catalyses tRNA(Leu) + L-leucine + ATP = L-leucyl-tRNA(Leu) + AMP + diphosphate. The sequence is that of Leucine--tRNA ligase from Marinomonas sp. (strain MWYL1).